The primary structure comprises 360 residues: N-acetylmuramoyl-L-alanine amidase CwlL (360 aa).

The first 39 residues, 1 to 39 (MVKVVKNFVKVNQYTRPGLKLAGVKGIVMHYTATPGASA), serve as a signal peptide directing secretion. The N-acetylmuramoyl-L-alanine amidase domain occupies 40–154 (LNERDYFNGT…DVTNKICPAP (115 aa)). Repeat copies occupy residues 166-191 (RKKV…SSKS), 196-259 (LKKG…EKAL), 265-289 (KKKK…KVKS), and 291-355 (LMKG…KAKL). 2 X approximate repeats stretches follow at residues 166-289 (RKKV…KVKS) and 196-355 (LKKG…KAKL).

The protein belongs to the N-acetylmuramoyl-L-alanine amidase 2 family.

It is found in the secreted. It catalyses the reaction Hydrolyzes the link between N-acetylmuramoyl residues and L-amino acid residues in certain cell-wall glycopeptides.. This Bacillus licheniformis protein is N-acetylmuramoyl-L-alanine amidase CwlL (cwlL).